The primary structure comprises 308 residues: Palmitoyltransferase ZDHHC7 (308 aa).

The Cytoplasmic segment spans residues 1 to 50 (MQPSGHRLRDIEHHPLLTDNDNYDSASSSSSETDMADRVWFIRDGCGMVC). Residues 51-71 (AVMTWLLVVYADFVVTFVMLL) form a helical membrane-spanning segment. At 72–75 (PSKD) the chain is on the lumenal side. The helical transmembrane segment at 76–96 (FWYSVVNGVLFNCLAVLALSS) threads the bilayer. Topologically, residues 97-173 (HLRTMLTDPG…NNCVGEKNQR (77 aa)) are cytoplasmic. In terms of domain architecture, DHHC spans 130–180 (YKCPKCCCIKPERAHHCSICKRCIRKMDHHCPWVNNCVGEKNQRFFVLFTM). C160 functions as the S-palmitoyl cysteine intermediate in the catalytic mechanism. The helical transmembrane segment at 174-194 (FFVLFTMYIALSSVHALILCG) threads the bilayer. At 195–217 (LQFISCVRGQWTECSDFSPPITV) the chain is on the lumenal side. A helical membrane pass occupies residues 218–238 (ILLVFLCLEGLLFFTFTAVMF). At 239-308 (GTQIHSICND…TRKGGPEFSV (70 aa)) the chain is on the cytoplasmic side.

It belongs to the DHHC palmitoyltransferase family. Homooligomers. Heterooligomers with ZDHHC3. Post-translationally, autopalmitoylated. As to expression, ubiquitously expressed, with highest levels in liver, kidney and brain. Expressed in all brain regions.

The protein localises to the golgi apparatus membrane. The enzyme catalyses L-cysteinyl-[protein] + hexadecanoyl-CoA = S-hexadecanoyl-L-cysteinyl-[protein] + CoA. It carries out the reaction L-cysteinyl-[protein] + tetradecanoyl-CoA = S-tetradecanoyl-L-cysteinyl-[protein] + CoA. It catalyses the reaction L-cysteinyl-[protein] + octadecanoyl-CoA = S-octadecanoyl-L-cysteinyl-[protein] + CoA. Its function is as follows. Golgi-localized palmitoyltransferase that catalyzes the addition of palmitate onto various protein substrates and therefore functions in several unrelated biological processes. Has no stringent fatty acid selectivity and in addition to palmitate can also transfer onto target proteins myristate from tetradecanoyl-CoA and stearate from octadecanoyl-CoA. Palmitoylates sex steroid hormone receptors, including ESR1, PGR and AR, thereby regulating their targeting to the plasma membrane and their function in rapid intracellular signaling upon binding of sex hormones. Palmitoylates GNAQ, a heterotrimeric G protein, regulating its dynamic localization at the plasma membrane and is thereby involved in GNAQ-dependent G protein-coupled receptor signaling pathways. Also functions in ligand-induced cell death by regulating the FAS signaling pathway through the palmitoylation and stabilization of the receptor at the plasma membrane. In epithelial cells, palmitoylates SCRIB and regulates its localization to the plasma membrane, regulating indirectly cell polarity and differentiation. Also palmitoylates JAM3 and promotes its expression at tight junctions and regulates its function in cell migration. Palmitoylates the glucose transporter GLUT4/SLC2A4 and controls the insulin-dependent translocation of GLUT4 to the plasma membrane. In brain, could also palmitoylate SNAP25 and DLG4/PSD95. Could also palmitoylate DNAJC5 and regulate its localization to the Golgi membrane. Could also palmitoylate NCDN. May play a role in follicle stimulation hormone (FSH) activation of testicular Sertoli cells. Activates pyroptosis by catalyzing palmitoylation of gasdermin-D (GSDMD). The sequence is that of Palmitoyltransferase ZDHHC7 from Mus musculus (Mouse).